A 344-amino-acid polypeptide reads, in one-letter code: Phenylalanine--tRNA ligase alpha subunit (344 aa).

A Mg(2+)-binding site is contributed by Glu-256.

The protein belongs to the class-II aminoacyl-tRNA synthetase family. Phe-tRNA synthetase alpha subunit type 1 subfamily. Tetramer of two alpha and two beta subunits. Requires Mg(2+) as cofactor.

The protein localises to the cytoplasm. It catalyses the reaction tRNA(Phe) + L-phenylalanine + ATP = L-phenylalanyl-tRNA(Phe) + AMP + diphosphate + H(+). This chain is Phenylalanine--tRNA ligase alpha subunit, found in Bacillus licheniformis (strain ATCC 14580 / DSM 13 / JCM 2505 / CCUG 7422 / NBRC 12200 / NCIMB 9375 / NCTC 10341 / NRRL NRS-1264 / Gibson 46).